Here is a 399-residue protein sequence, read N- to C-terminus: L-methionine gamma-lyase (399 aa).

Residues 59-61 (YTR) and 89-90 (GM) each bind pyridoxal 5'-phosphate. Residue Tyr-114 coordinates substrate. Position 209 to 211 (209 to 211 (SAT)) interacts with pyridoxal 5'-phosphate. The residue at position 212 (Lys-212) is an N6-(pyridoxal phosphate)lysine. Substrate is bound at residue Arg-376.

This sequence belongs to the trans-sulfuration enzymes family. L-methionine gamma-lyase subfamily. As to quaternary structure, homotetramer; dimer of active dimers. Pyridoxal 5'-phosphate serves as cofactor.

It carries out the reaction L-methionine + H2O = methanethiol + 2-oxobutanoate + NH4(+). Catalyzes the alpha,gamma-elimination of L-methionine to produce methanethiol, 2-oxobutanoate and ammonia. This is L-methionine gamma-lyase from Pseudomonas deceptionensis.